Consider the following 78-residue polypeptide: Large ribosomal subunit protein bL28 (78 aa).

The protein belongs to the bacterial ribosomal protein bL28 family.

This Clavibacter michiganensis subsp. michiganensis (strain NCPPB 382) protein is Large ribosomal subunit protein bL28.